Here is a 263-residue protein sequence, read N- to C-terminus: 3-methyl-2-oxobutanoate hydroxymethyltransferase (263 aa).

Mg(2+)-binding residues include aspartate 45 and aspartate 84. 3-methyl-2-oxobutanoate contacts are provided by residues 45-46 (DS), aspartate 84, and lysine 112. Position 114 (glutamate 114) interacts with Mg(2+). Glutamate 180 serves as the catalytic Proton acceptor.

This sequence belongs to the PanB family. In terms of assembly, homodecamer; pentamer of dimers. Mg(2+) is required as a cofactor.

Its subcellular location is the cytoplasm. The catalysed reaction is 3-methyl-2-oxobutanoate + (6R)-5,10-methylene-5,6,7,8-tetrahydrofolate + H2O = 2-dehydropantoate + (6S)-5,6,7,8-tetrahydrofolate. It functions in the pathway cofactor biosynthesis; (R)-pantothenate biosynthesis; (R)-pantoate from 3-methyl-2-oxobutanoate: step 1/2. In terms of biological role, catalyzes the reversible reaction in which hydroxymethyl group from 5,10-methylenetetrahydrofolate is transferred onto alpha-ketoisovalerate to form ketopantoate. The chain is 3-methyl-2-oxobutanoate hydroxymethyltransferase from Enterobacter sp. (strain 638).